A 388-amino-acid polypeptide reads, in one-letter code: Formate-dependent phosphoribosylglycinamide formyltransferase (388 aa).

Residues 21–22 (EL) and Glu81 contribute to the N(1)-(5-phospho-beta-D-ribosyl)glycinamide site. Residues Arg113, Lys154, 159–164 (SSGHGQ), 193–196 (EEFI), and Glu201 contribute to the ATP site. Residues 118-306 (KFAAEELGLK…EFALHVRAVL (189 aa)) enclose the ATP-grasp domain. Residues Glu265 and Glu277 each coordinate Mg(2+). Residues Asp284, Lys352, and 359–360 (RR) contribute to the N(1)-(5-phospho-beta-D-ribosyl)glycinamide site.

This sequence belongs to the PurK/PurT family. Homodimer.

It catalyses the reaction N(1)-(5-phospho-beta-D-ribosyl)glycinamide + formate + ATP = N(2)-formyl-N(1)-(5-phospho-beta-D-ribosyl)glycinamide + ADP + phosphate + H(+). It participates in purine metabolism; IMP biosynthesis via de novo pathway; N(2)-formyl-N(1)-(5-phospho-D-ribosyl)glycinamide from N(1)-(5-phospho-D-ribosyl)glycinamide (formate route): step 1/1. Functionally, involved in the de novo purine biosynthesis. Catalyzes the transfer of formate to 5-phospho-ribosyl-glycinamide (GAR), producing 5-phospho-ribosyl-N-formylglycinamide (FGAR). Formate is provided by PurU via hydrolysis of 10-formyl-tetrahydrofolate. This is Formate-dependent phosphoribosylglycinamide formyltransferase from Nitratiruptor sp. (strain SB155-2).